Reading from the N-terminus, the 130-residue chain is MCKIMHKTIPKKQRQKSFYRGVRAEKLAAWWLRFKGFHIAEMRFKTKCGEIDLIARRGNLVLIVEVKARSTLLEAMEAVSRMNEKRIEAAADIWLARQKDYALLSVRFDLIAILPWRWPKHIPAFFTSDR.

It belongs to the UPF0102 family.

This is UPF0102 protein BT_1882 from Bartonella tribocorum (strain CIP 105476 / IBS 506).